The chain runs to 66 residues: MFREYKMYKFFEQVKQETYKVFWPNRKELIASTLVVVAAVFIFSLICLVLDYSIHNIMQLLLTIGK.

A helical membrane pass occupies residues 29 to 49 (LIASTLVVVAAVFIFSLICLV).

Belongs to the SecE/SEC61-gamma family. As to quaternary structure, component of the Sec protein translocase complex. Heterotrimer consisting of SecY, SecE and SecG subunits. The heterotrimers can form oligomers, although 1 heterotrimer is thought to be able to translocate proteins. Interacts with the ribosome. Interacts with SecDF, and other proteins may be involved. Interacts with SecA.

It is found in the cell inner membrane. In terms of biological role, essential subunit of the Sec protein translocation channel SecYEG. Clamps together the 2 halves of SecY. May contact the channel plug during translocation. In Rickettsia typhi (strain ATCC VR-144 / Wilmington), this protein is Protein translocase subunit SecE.